The following is a 652-amino-acid chain: Apicoplast pyruvate carrier 2 (652 aa).

Over 1-45 the chain is Cytoplasmic; the sequence is MSAFPASPQPSAFPASPQPSAFPASPQPSASPVSPRHCVSPSSGT. A disordered region spans residues 1-53; that stretch reads MSAFPASPQPSAFPASPQPSAFPASPQPSASPVSPRHCVSPSSGTLPSSSSPS. 12 consecutive transmembrane segments (helical) span residues 46 to 66, 126 to 146, 167 to 187, 189 to 209, 212 to 232, 278 to 298, 345 to 365, 385 to 405, 417 to 437, 445 to 465, 467 to 487, and 515 to 535; these read LPSSSSPSVSSCALRGLSSSS, NLLPYLIGFIRNAQATSAVSY, GTTLEKKAGTKKTAFLGSAWM, LGLALCGVCTHDLSLFLIAYG, TALGCGVAYPVPLAATLKLSP, LPYLSSVASDTASASRLSSLN, LVDPERTSAADEAAADAAERQ, SCSASQVFASLVLTPQDICSS, LSWQSLFFVQLFWKVLPLYPE, AAPAPLDSLFASVVRRVPRAL, SASRPDPRALHAAADAWSLTG, and LWGYIGGGIGYMRSTVVMNAL. The Cytoplasmic segment spans residues 536 to 652; it reads TAPCLFALST…LPYRFPTYSP (117 aa).

The protein belongs to the major facilitator superfamily. Interacts with apicoplast pyruvate carrier 1.

Its subcellular location is the plastid. It localises to the apicoplast. The protein resides in the membrane. Along with apicoplast pyruvate carrier 1, forms apicoplast pyruvate carrier (APC) complex, which transports pyruvate into the apicoplast and may also transport amino acids like methionine, serine, glycine and tryptophan with low efficiency. Required for maintaining pyruvate-dependent metabolic activities in the apicoplast, such as synthesis of fatty acids, isopentenyl pyrophosphate (IPP), dimethylallyl pyrophosphate (DMAPP) and methylerythritol 4-phosphate (MEP). Required for maintaining the integrity of the apicoplast. Required for normal parasite growth. The chain is Apicoplast pyruvate carrier 2 from Toxoplasma gondii.